The following is a 593-amino-acid chain: ATP-dependent RNA helicase DDX55 (593 aa).

Positions Trp-9–Ser-37 match the Q motif motif. Residues Ile-40–Ile-223 enclose the Helicase ATP-binding domain. Ala-53–Thr-60 contributes to the ATP binding site. A DEAD box motif is present at residues Asp-171–Asp-174. The Helicase C-terminal domain maps to Lys-241–Pro-405. The segment covering Ile-524 to Lys-535 has biased composition (basic residues). Disordered regions lie at residues Ile-524–Ala-545 and Glu-569–Asp-593. An important for nuclear localization region spans residues Lys-531–Lys-560. A coiled-coil region spans residues Lys-535 to Gly-565.

It belongs to the DEAD box helicase family. DDX55/SPB4 subfamily. In terms of assembly, interacts with 28S rRNA. Interacts with double-stranded RNA substrates in vitro; the interaction stimulates ATPase activity.

It localises to the nucleus. The protein localises to the nucleoplasm. The enzyme catalyses ATP + H2O = ADP + phosphate + H(+). Probable ATP-binding RNA helicase. Plays an essential role in early embryonic development. Has ATPase activity and is involved in the maturation of precursor large subunit rRNAs. This is ATP-dependent RNA helicase DDX55 (ddx55) from Danio rerio (Zebrafish).